Consider the following 194-residue polypeptide: Peptidyl-tRNA hydrolase (194 aa).

TRNA is bound at residue Tyr16. Residue His21 is the Proton acceptor of the active site. TRNA contacts are provided by Tyr67, Asn69, and Asn115.

The protein belongs to the PTH family. As to quaternary structure, monomer.

It localises to the cytoplasm. It catalyses the reaction an N-acyl-L-alpha-aminoacyl-tRNA + H2O = an N-acyl-L-amino acid + a tRNA + H(+). Functionally, hydrolyzes ribosome-free peptidyl-tRNAs (with 1 or more amino acids incorporated), which drop off the ribosome during protein synthesis, or as a result of ribosome stalling. In terms of biological role, catalyzes the release of premature peptidyl moieties from peptidyl-tRNA molecules trapped in stalled 50S ribosomal subunits, and thus maintains levels of free tRNAs and 50S ribosomes. This Synechocystis sp. (strain ATCC 27184 / PCC 6803 / Kazusa) protein is Peptidyl-tRNA hydrolase.